Here is a 397-residue protein sequence, read N- to C-terminus: MPIVSLPKIKHVRAFTVRGGGADYHDQGEGHWIDDHIATPMSRYPDYRQSRQSFGINVLGTLVVEIEAEDGTVGFAVTTGGEPAAYIVEKHLARFLEGRAPTDYEKIWDQMYFSTQYYGRKGLVVNAISGVDLALWDLLGKLRQEPVYHLLGGAVRDELQFYATGARPDKAKEFGFIGGKMPLHHGPAEGVEGLKKNIAELADMRSKVGDDFWLMWDCWMALDVDYATRLAIAAHDFGLKWIEEAISPDDYWGYQQLKRNVPKGMLVTTGEHEATRWGFRMLMEMDCCDIIQPDVGWCGGVTELLKISALADAHGKMVVPHGSSVYSYHFVITRHNSPFAEFLMMHPGPTEVVPMFHPQLLGEPVPDNGRMKVSALDKPGFGVDLNPDIAMHRPYTH.

Substrate is bound by residues His-25 and Arg-51. The Mg(2+) site is built by Asp-217, Glu-243, and Glu-271. The Proton acceptor role is filled by His-321. Substrate is bound at residue Glu-341.

This sequence belongs to the mandelate racemase/muconate lactonizing enzyme family. RhamD subfamily. In terms of assembly, homooctamer; tetramer of dimers. Mg(2+) serves as cofactor.

It carries out the reaction L-rhamnonate = 2-dehydro-3-deoxy-L-rhamnonate + H2O. It participates in carbohydrate degradation; L-rhamnose degradation. Its function is as follows. Catalyzes the dehydration of L-rhamnonate to 2-keto-3-deoxy-L-rhamnonate (KDR). Also shows activity with L-lyxonate and L-mannonate, with much lower catalytic efficiency. Catalyzes the third step in an alternative pathway for rhamnose utilization that does not involve phosphorylated intermediates. The sequence is that of L-rhamnonate dehydratase from Sphingomonas sp. (strain SKA58).